The primary structure comprises 341 residues: Mitochondrial glutathione transporter SLC25A40 (341 aa).

3 Solcar repeats span residues 14 to 132, 140 to 224, and 234 to 328; these read ITPS…LRDI, RAEI…VKQS, and PTFA…GKSF. A run of 6 helical transmembrane segments spans residues 20-40, 104-124, 143-163, 200-221, 236-256, and 299-319; these read MIASSMGALLTSFFVTPLDVV, LWSGLPPTLVMAVPATVIYFT, IASLVAGATARLWSATLISPL, WGPTVLRDVPFSALYWHNYELV, FAISFTAGAVSGSIAAIVTLP, and GLFAGLIPRLIKVAPACAIMI.

This sequence belongs to the mitochondrial carrier (TC 2.A.29) family.

It is found in the mitochondrion inner membrane. It carries out the reaction glutathione(in) = glutathione(out). Functionally, probable mitochondrial transporter required for glutathione import into mitochondria. Glutathione, which plays key roles in oxidative metabolism, is produced exclusively in the cytosol and is imported in many organelles. Mitochondrial glutathione is required for the activity and stability of proteins containing iron-sulfur clusters. The sequence is that of Mitochondrial glutathione transporter SLC25A40 from Xenopus tropicalis (Western clawed frog).